We begin with the raw amino-acid sequence, 119 residues long: Acidic phospholipase A2 CM-II (119 aa).

Ca(2+) is bound by residues Tyr-25, Gly-27, and Gly-29. His-45 is a catalytic residue. Position 46 (Asp-46) interacts with Ca(2+). Asp-87 is an active-site residue.

It belongs to the phospholipase A2 family. Group II subfamily. D49 sub-subfamily. Ca(2+) is required as a cofactor. In terms of processing, contains 6 disulfide bonds. In terms of tissue distribution, expressed by the venom gland.

The protein localises to the secreted. The catalysed reaction is a 1,2-diacyl-sn-glycero-3-phosphocholine + H2O = a 1-acyl-sn-glycero-3-phosphocholine + a fatty acid + H(+). In terms of biological role, PLA2 catalyzes the calcium-dependent hydrolysis of the 2-acyl groups in 3-sn-phosphoglycerides. The protein is Acidic phospholipase A2 CM-II of Bitis nasicornis (Rhinoceros adder).